Here is a 399-residue protein sequence, read N- to C-terminus: Enoyl-[acyl-carrier-protein] reductase [NADH] (399 aa).

NAD(+)-binding positions include 48–53 (GASTGY), 74–75 (FE), 111–112 (DA), and 139–140 (LA). Residue Y225 participates in substrate binding. Y235 acts as the Proton donor in catalysis. NAD(+)-binding positions include K244 and 274-276 (VVT).

Belongs to the TER reductase family. As to quaternary structure, monomer.

The catalysed reaction is a 2,3-saturated acyl-[ACP] + NAD(+) = a (2E)-enoyl-[ACP] + NADH + H(+). The protein operates within lipid metabolism; fatty acid biosynthesis. Its function is as follows. Involved in the final reduction of the elongation cycle of fatty acid synthesis (FAS II). Catalyzes the reduction of a carbon-carbon double bond in an enoyl moiety that is covalently linked to an acyl carrier protein (ACP). In Yersinia enterocolitica serotype O:8 / biotype 1B (strain NCTC 13174 / 8081), this protein is Enoyl-[acyl-carrier-protein] reductase [NADH].